The following is a 158-amino-acid chain: Phosphopantetheine adenylyltransferase (158 aa).

A substrate-binding site is contributed by Ser-9. ATP-binding positions include 9 to 10 (SF) and His-17. Substrate-binding residues include Lys-41, Val-73, and Lys-87. ATP contacts are provided by residues 88 to 90 (GLR), Glu-98, and 122 to 128 (YSFVSSS).

Belongs to the bacterial CoaD family. In terms of assembly, homohexamer. It depends on Mg(2+) as a cofactor.

The protein localises to the cytoplasm. The enzyme catalyses (R)-4'-phosphopantetheine + ATP + H(+) = 3'-dephospho-CoA + diphosphate. Its pathway is cofactor biosynthesis; coenzyme A biosynthesis; CoA from (R)-pantothenate: step 4/5. Its function is as follows. Reversibly transfers an adenylyl group from ATP to 4'-phosphopantetheine, yielding dephospho-CoA (dPCoA) and pyrophosphate. This is Phosphopantetheine adenylyltransferase from Mycobacterium sp. (strain JLS).